A 184-amino-acid chain; its full sequence is ADP-ribosylation factor-like protein 2 (184 aa).

The N-myristoyl glycine moiety is linked to residue G2. GTP is bound by residues 23–30, 66–70, G68, and 125–128; these read GLDNAGKT, DVGGQ, and NKSD.

This sequence belongs to the small GTPase superfamily. Arf family.

It is found in the cytoplasm. Its subcellular location is the cell membrane. The protein localises to the cytoskeleton. The protein resides in the microtubule organizing center. It localises to the centrosome. In terms of biological role, GTP-binding protein that functions in embryogenesis, cytokinesis, germline development and microtubulule cytoskeleton dynamics. This is ADP-ribosylation factor-like protein 2 (evl-20.1) from Caenorhabditis briggsae.